The sequence spans 385 residues: UDP-N-acetylglucosamine--N-acetylmuramyl-(pentapeptide) pyrophosphoryl-undecaprenol N-acetylglucosamine transferase (385 aa).

UDP-N-acetyl-alpha-D-glucosamine-binding positions include 11–13 (TGG), Asn117, Arg160, Ser215, and Gln317.

This sequence belongs to the glycosyltransferase 28 family. MurG subfamily.

It localises to the cell inner membrane. It catalyses the reaction di-trans,octa-cis-undecaprenyl diphospho-N-acetyl-alpha-D-muramoyl-L-alanyl-D-glutamyl-meso-2,6-diaminopimeloyl-D-alanyl-D-alanine + UDP-N-acetyl-alpha-D-glucosamine = di-trans,octa-cis-undecaprenyl diphospho-[N-acetyl-alpha-D-glucosaminyl-(1-&gt;4)]-N-acetyl-alpha-D-muramoyl-L-alanyl-D-glutamyl-meso-2,6-diaminopimeloyl-D-alanyl-D-alanine + UDP + H(+). The protein operates within cell wall biogenesis; peptidoglycan biosynthesis. Its function is as follows. Cell wall formation. Catalyzes the transfer of a GlcNAc subunit on undecaprenyl-pyrophosphoryl-MurNAc-pentapeptide (lipid intermediate I) to form undecaprenyl-pyrophosphoryl-MurNAc-(pentapeptide)GlcNAc (lipid intermediate II). The chain is UDP-N-acetylglucosamine--N-acetylmuramyl-(pentapeptide) pyrophosphoryl-undecaprenol N-acetylglucosamine transferase from Rickettsia typhi (strain ATCC VR-144 / Wilmington).